Reading from the N-terminus, the 153-residue chain is SsrA-binding protein (153 aa).

The interval 131–153 (EYDKRDSIRERDDRREMDRAFKR) is disordered.

It belongs to the SmpB family.

Its subcellular location is the cytoplasm. In terms of biological role, required for rescue of stalled ribosomes mediated by trans-translation. Binds to transfer-messenger RNA (tmRNA), required for stable association of tmRNA with ribosomes. tmRNA and SmpB together mimic tRNA shape, replacing the anticodon stem-loop with SmpB. tmRNA is encoded by the ssrA gene; the 2 termini fold to resemble tRNA(Ala) and it encodes a 'tag peptide', a short internal open reading frame. During trans-translation Ala-aminoacylated tmRNA acts like a tRNA, entering the A-site of stalled ribosomes, displacing the stalled mRNA. The ribosome then switches to translate the ORF on the tmRNA; the nascent peptide is terminated with the 'tag peptide' encoded by the tmRNA and targeted for degradation. The ribosome is freed to recommence translation, which seems to be the essential function of trans-translation. This chain is SsrA-binding protein, found in Parabacteroides distasonis (strain ATCC 8503 / DSM 20701 / CIP 104284 / JCM 5825 / NCTC 11152).